The sequence spans 280 residues: DNA repair protein RecO (280 aa).

Positions Asp-261–Ala-280 are disordered.

It belongs to the RecO family.

Functionally, involved in DNA repair and RecF pathway recombination. The protein is DNA repair protein RecO of Mycolicibacterium smegmatis (strain ATCC 700084 / mc(2)155) (Mycobacterium smegmatis).